The sequence spans 86 residues: Large ribosomal subunit protein bL31B (86 aa).

It belongs to the bacterial ribosomal protein bL31 family. Type B subfamily. In terms of assembly, part of the 50S ribosomal subunit.

The polypeptide is Large ribosomal subunit protein bL31B (Salmonella paratyphi A (strain ATCC 9150 / SARB42)).